Here is a 168-residue protein sequence, read N- to C-terminus: Cell division inhibitor SulA (168 aa).

The segment at 106–112 (ALLTGNY) is ftsZ binding. Positions 161 to 168 (KIHSSLYH) are lon protease binding.

Belongs to the SulA family. In terms of assembly, interacts with FtsZ. Post-translationally, is rapidly cleaved and degraded by the Lon protease once DNA damage is repaired.

Component of the SOS system and an inhibitor of cell division. Accumulation of SulA causes rapid cessation of cell division and the appearance of long, non-septate filaments. In the presence of GTP, binds a polymerization-competent form of FtsZ in a 1:1 ratio, thus inhibiting FtsZ polymerization and therefore preventing it from participating in the assembly of the Z ring. This mechanism prevents the premature segregation of damaged DNA to daughter cells during cell division. The chain is Cell division inhibitor SulA from Yersinia enterocolitica serotype O:8 / biotype 1B (strain NCTC 13174 / 8081).